A 393-amino-acid polypeptide reads, in one-letter code: Na(+)/H(+) antiporter NhaA (393 aa).

12 helical membrane passes run 23 to 43 (AGGI…NSPF), 58 to 78 (LSLA…LVGL), 96 to 116 (MLPG…FAVL), 126 to 146 (GWAV…SLLG), 155 to 175 (VFLA…IAIF), 178 to 198 (AEIS…LFVM), 201 to 221 (MGVV…FFVF), 224 to 244 (GVHA…KPAP), 265 to 285 (VAFI…FKGL), 298 to 318 (ILLG…WLAI), 334 to 354 (LYGV…IGLL), and 367 to 387 (IGVL…LRAA).

The protein belongs to the NhaA Na(+)/H(+) (TC 2.A.33) antiporter family.

Its subcellular location is the cell inner membrane. The catalysed reaction is Na(+)(in) + 2 H(+)(out) = Na(+)(out) + 2 H(+)(in). Its function is as follows. Na(+)/H(+) antiporter that extrudes sodium in exchange for external protons. The chain is Na(+)/H(+) antiporter NhaA from Brucella canis (strain ATCC 23365 / NCTC 10854 / RM-666).